A 287-amino-acid polypeptide reads, in one-letter code: Oxaloacetate decarboxylase (287 aa).

Substrate is bound at residue S50. D88 lines the Mg(2+) pocket. Substrate-binding residues include R159 and H235.

It belongs to the isocitrate lyase family. Oxaloacetate decarboxylase subfamily. Homotetramer; dimer of dimers. It depends on Mg(2+) as a cofactor.

The enzyme catalyses oxaloacetate + H(+) = pyruvate + CO2. Its function is as follows. Catalyzes the decarboxylation of oxaloacetate into pyruvate. Seems to play a role in maintaining cellular concentrations of bicarbonate and pyruvate. This Pseudomonas aeruginosa (strain LESB58) protein is Oxaloacetate decarboxylase.